Consider the following 188-residue polypeptide: Elongation factor P (188 aa).

The protein belongs to the elongation factor P family.

It is found in the cytoplasm. Its pathway is protein biosynthesis; polypeptide chain elongation. Involved in peptide bond synthesis. Stimulates efficient translation and peptide-bond synthesis on native or reconstituted 70S ribosomes in vitro. Probably functions indirectly by altering the affinity of the ribosome for aminoacyl-tRNA, thus increasing their reactivity as acceptors for peptidyl transferase. In Rhodopseudomonas palustris (strain BisB5), this protein is Elongation factor P.